The primary structure comprises 982 residues: Glycine dehydrogenase (decarboxylating) (982 aa).

N6-(pyridoxal phosphate)lysine is present on Lys-721.

Belongs to the GcvP family. In terms of assembly, the glycine cleavage system is composed of four proteins: P, T, L and H. The cofactor is pyridoxal 5'-phosphate.

It catalyses the reaction N(6)-[(R)-lipoyl]-L-lysyl-[glycine-cleavage complex H protein] + glycine + H(+) = N(6)-[(R)-S(8)-aminomethyldihydrolipoyl]-L-lysyl-[glycine-cleavage complex H protein] + CO2. In terms of biological role, the glycine cleavage system catalyzes the degradation of glycine. The P protein binds the alpha-amino group of glycine through its pyridoxal phosphate cofactor; CO(2) is released and the remaining methylamine moiety is then transferred to the lipoamide cofactor of the H protein. In Prochlorococcus marinus (strain MIT 9303), this protein is Glycine dehydrogenase (decarboxylating).